The primary structure comprises 273 residues: MIVSTSVEQSAQFSVKSLTPFGALLEATEDHSDIQQLSIEQLCQLTWEHRLIVLRGFSLLEREELSTYCQRWGELLVWNFGTVLDLIVHQNPENYLFTNGNVPFHWDGAFAEAVPRFLFFQCLKAPEAGSGGESLFCDTVRILQNVSPQQREIWQKTEISYKTQKVAHYGGEITKSLVIKHPITGLSTLRFAEPLNDASVHLNPLYVEVCNLPAEEQNPFINELIENLYLPQNCFAHEWQEGDFLIADNHALLHGRNPFLSNSQRHLQRVHIL.

Histidine 105, aspartate 107, and histidine 254 together coordinate Fe cation.

The protein belongs to the TfdA dioxygenase family. Fe(2+) serves as cofactor.

It catalyses the reaction (2S)-3-(1H-indol-3-yl)-2-isocyanopropanoate + 2-oxoglutarate + O2 + H(+) = 3-[(Z)-2-isocyanoethenyl]-1H-indole + succinate + 2 CO2 + H2O. In terms of biological role, involved in the biosynthesis of ambiguines, a family of hapalindole-type alkaloids. Responsible for the synthesis of Z-3-(2-isocyanoethen)-indole, a biosynthetic precursor to all ambiguines. This chain is 3-((Z)-2-isocyanoethenyl)-1H-indole synthase, found in Fischerella ambigua (strain UTEX 1903).